Reading from the N-terminus, the 120-residue chain is NAD(P)H-quinone oxidoreductase subunit 3 (120 aa).

3 helical membrane passes run 6-26, 64-84, and 89-109; these read GYDAFLGFLLISAAVPALALV, MFALVFVIFDVETVFLYPWAV, and LGLLAFIEALIFISILIVALA.

Belongs to the complex I subunit 3 family. In terms of assembly, NDH-1 can be composed of about 15 different subunits; different subcomplexes with different compositions have been identified which probably have different functions.

It is found in the cellular thylakoid membrane. The catalysed reaction is a plastoquinone + NADH + (n+1) H(+)(in) = a plastoquinol + NAD(+) + n H(+)(out). The enzyme catalyses a plastoquinone + NADPH + (n+1) H(+)(in) = a plastoquinol + NADP(+) + n H(+)(out). In terms of biological role, NDH-1 shuttles electrons from an unknown electron donor, via FMN and iron-sulfur (Fe-S) centers, to quinones in the respiratory and/or the photosynthetic chain. The immediate electron acceptor for the enzyme in this species is believed to be plastoquinone. Couples the redox reaction to proton translocation, and thus conserves the redox energy in a proton gradient. Cyanobacterial NDH-1 also plays a role in inorganic carbon-concentration. The sequence is that of NAD(P)H-quinone oxidoreductase subunit 3 from Prochlorococcus marinus (strain SARG / CCMP1375 / SS120).